A 278-amino-acid polypeptide reads, in one-letter code: S-adenosylmethionine decarboxylase proenzyme (278 aa).

Residues 96–115 (LTPESLTGESPGPLPGNKPS) are disordered. S126 serves as the catalytic Schiff-base intermediate with substrate; via pyruvic acid. S126 carries the post-translational modification Pyruvic acid (Ser); by autocatalysis. Residue H131 is the Proton acceptor; for processing activity of the active site. The active-site Proton donor; for catalytic activity is the C154.

The protein belongs to the prokaryotic AdoMetDC family. Type 2 subfamily. As to quaternary structure, heterooctamer of four alpha and four beta chains arranged as a tetramer of alpha/beta heterodimers. Requires pyruvate as cofactor. Is synthesized initially as an inactive proenzyme. Formation of the active enzyme involves a self-maturation process in which the active site pyruvoyl group is generated from an internal serine residue via an autocatalytic post-translational modification. Two non-identical subunits are generated from the proenzyme in this reaction, and the pyruvate is formed at the N-terminus of the alpha chain, which is derived from the carboxyl end of the proenzyme. The post-translation cleavage follows an unusual pathway, termed non-hydrolytic serinolysis, in which the side chain hydroxyl group of the serine supplies its oxygen atom to form the C-terminus of the beta chain, while the remainder of the serine residue undergoes an oxidative deamination to produce ammonia and the pyruvoyl group blocking the N-terminus of the alpha chain.

The enzyme catalyses S-adenosyl-L-methionine + H(+) = S-adenosyl 3-(methylsulfanyl)propylamine + CO2. It functions in the pathway amine and polyamine biosynthesis; S-adenosylmethioninamine biosynthesis; S-adenosylmethioninamine from S-adenosyl-L-methionine: step 1/1. Functionally, catalyzes the decarboxylation of S-adenosylmethionine to S-adenosylmethioninamine (dcAdoMet), the propylamine donor required for the synthesis of the polyamines spermine and spermidine from the diamine putrescine. In Alkaliphilus metalliredigens (strain QYMF), this protein is S-adenosylmethionine decarboxylase proenzyme.